Consider the following 230-residue polypeptide: Ribonuclease 3 (230 aa).

Residues tyrosine 5 to aspartate 125 enclose the RNase III domain. A Mg(2+)-binding site is contributed by glutamate 40. Residue aspartate 44 is part of the active site. Residues aspartate 111 and glutamate 114 each coordinate Mg(2+). Residue glutamate 114 is part of the active site. The DRBM domain maps to aspartate 153–glutamine 223.

Belongs to the ribonuclease III family. Homodimer. Requires Mg(2+) as cofactor.

The protein localises to the cytoplasm. It catalyses the reaction Endonucleolytic cleavage to 5'-phosphomonoester.. Digests double-stranded RNA. Involved in the processing of primary rRNA transcript to yield the immediate precursors to the large and small rRNAs (23S and 16S). Processes some mRNAs, and tRNAs when they are encoded in the rRNA operon. Processes pre-crRNA and tracrRNA of type II CRISPR loci if present in the organism. The protein is Ribonuclease 3 of Francisella tularensis subsp. holarctica (strain FTNF002-00 / FTA).